A 558-amino-acid chain; its full sequence is 5-aminolevulinate synthase, mitochondrial (558 aa).

Residues 1-25 (MERVVKLAAKHCPFVSKADPSALRR) constitute a mitochondrion transit peptide. A disordered region spans residues 103 to 124 (TTTPVTKKHQMPKHYASDLNGV). Arg152, Ser265, and Lys284 together coordinate substrate. Ser317, His345, and Thr374 together coordinate pyridoxal 5'-phosphate. Lys377 is a catalytic residue. Lys377 bears the N6-(pyridoxal phosphate)lysine mark. 2 residues coordinate pyridoxal 5'-phosphate: Thr406 and Thr407. Residue Thr492 coordinates substrate.

Belongs to the class-II pyridoxal-phosphate-dependent aminotransferase family. In terms of assembly, homodimer. Requires pyridoxal 5'-phosphate as cofactor.

It localises to the mitochondrion matrix. The catalysed reaction is succinyl-CoA + glycine + H(+) = 5-aminolevulinate + CO2 + CoA. The protein operates within porphyrin-containing compound metabolism; protoporphyrin-IX biosynthesis; 5-aminolevulinate from glycine: step 1/1. Catalyzes the synthesis of 5-aminolevulinate (ALA) from succinyl-CoA and glycine, the first and rate-limiting step in heme biosynthesis. The sequence is that of 5-aminolevulinate synthase, mitochondrial from Schizosaccharomyces pombe (strain 972 / ATCC 24843) (Fission yeast).